The chain runs to 330 residues: Neurogenic differentiation factor 4 (330 aa).

Positions 1–79 are disordered; sequence MTKTYTKAKE…RGPKKKKMTK (79 aa). Residues 25–35 show a composition bias toward basic and acidic residues; that stretch reads LSSKDELKAEN. The segment covering 52-64 has biased composition (acidic residues); sequence DSIEEEEEEEDDG. The span at 67–79 shows a compositional bias: basic residues; sequence PKRRGPKKKKMTK. Positions 73–79 match the Nuclear localization signal motif; it reads KKKKMTK. A bHLH domain is found at 87 to 139; it reads ARRVKANARERTRMHGLNDALDNLRRVMPCYSKTQKLSKIETLRLARNYIWAL. Residues 162–183 form a leucine-zipper region; sequence LSQPTSNLVAGCLQLGPQTLFL.

As to quaternary structure, efficient DNA binding requires dimerization with another bHLH protein. Post-translationally, serine or threonine phosphorylation within the basic region may regulate neurogenic activity. As to expression, expressed in both the developing central nervous system and peripheral nervous system.

It is found in the nucleus. Its function is as follows. Probably acts as a transcriptional activator. Mediates neuronal differentiation. Required for the regulation of amacrine cell fate specification in the retina. The sequence is that of Neurogenic differentiation factor 4 (NEUROD4) from Gallus gallus (Chicken).